A 225-amino-acid chain; its full sequence is Uracil-DNA glycosylase (225 aa).

Residue D65 is the Proton acceptor of the active site.

The protein belongs to the uracil-DNA glycosylase (UDG) superfamily. UNG family.

The protein resides in the cytoplasm. The catalysed reaction is Hydrolyzes single-stranded DNA or mismatched double-stranded DNA and polynucleotides, releasing free uracil.. Excises uracil residues from the DNA which can arise as a result of misincorporation of dUMP residues by DNA polymerase or due to deamination of cytosine. In Clostridium perfringens (strain ATCC 13124 / DSM 756 / JCM 1290 / NCIMB 6125 / NCTC 8237 / Type A), this protein is Uracil-DNA glycosylase.